The following is a 585-amino-acid chain: A-type ATP synthase subunit A (585 aa).

Residue 237–244 participates in ATP binding; the sequence is GPFGSGKT.

It belongs to the ATPase alpha/beta chains family. As to quaternary structure, has multiple subunits with at least A(3), B(3), C, D, E, F, H, I and proteolipid K(x).

The protein localises to the cell membrane. It catalyses the reaction ATP + H2O + 4 H(+)(in) = ADP + phosphate + 5 H(+)(out). Its function is as follows. Component of the A-type ATP synthase that produces ATP from ADP in the presence of a proton gradient across the membrane. The A chain is the catalytic subunit. The sequence is that of A-type ATP synthase subunit A from Natronomonas pharaonis (strain ATCC 35678 / DSM 2160 / CIP 103997 / JCM 8858 / NBRC 14720 / NCIMB 2260 / Gabara) (Halobacterium pharaonis).